A 358-amino-acid chain; its full sequence is Probable tartrate dehydrogenase/decarboxylase TtuC' (358 aa).

Mn(2+) is bound by residues Asp222, Asp246, and Asp250.

The protein belongs to the isocitrate and isopropylmalate dehydrogenases family. Mg(2+) is required as a cofactor. Mn(2+) serves as cofactor. It depends on K(+) as a cofactor.

It localises to the cytoplasm. It catalyses the reaction tartrate + NAD(+) = 2-hydroxy-3-oxosuccinate + NADH + H(+). The catalysed reaction is (2R,3S)-tartrate + NAD(+) = 2-hydroxy-3-oxosuccinate + NADH + H(+). It carries out the reaction (2R,3R)-tartrate + NAD(+) = 2-hydroxy-3-oxosuccinate + NADH + H(+). The enzyme catalyses (2R,3R)-tartrate + H(+) = (R)-glycerate + CO2. It catalyses the reaction (R)-malate + NAD(+) = pyruvate + CO2 + NADH. It participates in carbohydrate acid metabolism; tartrate degradation; 2-hydroxy-3-oxosuccinate from L-tartrate: step 1/1. It functions in the pathway carbohydrate acid metabolism; tartrate degradation; 2-hydroxy-3-oxosuccinate from meso-tartrate: step 1/1. Its pathway is carbohydrate acid metabolism; tartrate degradation; D-glycerate from L-tartrate: step 1/1. Functionally, has multiple catalytic activities. Apart from catalyzing the oxidation of (+)-tartrate to oxaloglycolate, also converts meso-tartrate to D-glycerate and catalyzes the oxidative decarboxylation of D-malate to pyruvate. The chain is Probable tartrate dehydrogenase/decarboxylase TtuC' (ttuC') from Agrobacterium vitis (Rhizobium vitis).